A 394-amino-acid chain; its full sequence is T-cell acute lymphocytic leukemia protein 1 (394 aa).

Basic and acidic residues predominate over residues 1-17 (MSLKMMERLSTDMDGTR). Residues 1 to 49 (MSLKMMERLSTDMDGTRDVASPPARQDAAEPERTVELSGVKEGAAPNSP) form a disordered region. 7 consecutive repeat copies span residues 83 to 89 (TELCRAT), 94 to 100 (TELCRAP), 105 to 111 (TELCRAP), 116 to 122 (TELCRAP), 127 to 133 (TELCRPP), 149 to 155 (SELCRAP), and 167 to 173 (TELCRPP). The 7 X 7 AA approximate repeats of [TS]-E-L-C-R-[AP]-P stretch occupies residues 83–173 (TELCRATLTP…TATTELCRPP (91 aa)). The bHLH domain maps to 262-314 (VRRIFTNSRERWRQQNVNGAFAELRKLIPTHPPDKKLSKNEILRLAMKYINFL). The tract at residues 347-394 (LSPNSSCGSSLDGAPSPDSYSEEHDALDSKHSRNLHQAMLPIDGSGQR) is disordered. Residues 367–377 (SEEHDALDSKH) are compositionally biased toward basic and acidic residues.

First expressed in patches on the ventral side of the embryo in a region that will give rise to hematopoietic tissue. By late neurula stages, expressed throughout the ventral blood island region. By tailbud stages, expression extends to probable vascular progenitor cells, but is excluded from the presumptive liver anlage. Also expressed in the central nervous system at the tailbud stage.

It localises to the nucleus. Its function is as follows. Transcription factor that acts synergistically with lmo2 and gata1 to specify embryonic dorsal mesoderm to a hematopoietic fate. The sequence is that of T-cell acute lymphocytic leukemia protein 1 from Xenopus laevis (African clawed frog).